A 363-amino-acid chain; its full sequence is Zinc finger CCCH domain-containing protein 53 (363 aa).

The C3H1-type zinc-finger motif lies at 154–181; the sequence is KNRPKICSFYTIGQCKRGAECSFRHEMP. Residues 225–310 enclose the RRM domain; it reads KTLYVGGLNS…PPNEYSHYPS (86 aa). The segment at 281 to 348 is disordered; sequence LISQQQNQHS…SYSYPMPPHQ (68 aa). A compositionally biased stretch (low complexity) spans 283–297; sequence SQQQNQHSQMQQYYM. The span at 320–336 shows a compositional bias: polar residues; it reads FSTQESDGSSTSENNRA.

The sequence is that of Zinc finger CCCH domain-containing protein 53 from Arabidopsis thaliana (Mouse-ear cress).